Consider the following 403-residue polypeptide: GDSL esterase/lipase At1g28590 (403 aa).

An N-terminal signal peptide occupies residues 1–27 (MASLDSLPAMKLVRFILSTLLVTSVNS). Ser43 serves as the catalytic Nucleophile. N-linked (GlcNAc...) asparagine glycans are attached at residues Asn139 and Asn323. Catalysis depends on residues Asp346 and His349.

Belongs to the 'GDSL' lipolytic enzyme family.

The protein resides in the secreted. The protein is GDSL esterase/lipase At1g28590 of Arabidopsis thaliana (Mouse-ear cress).